The following is a 1151-amino-acid chain: Trafficking protein particle complex subunit 9 (1151 aa).

The protein belongs to the NIBP family. As to quaternary structure, part of the multisubunit TRAPP (transport protein particle) complex.

It localises to the golgi apparatus. Its subcellular location is the cis-Golgi network. The protein resides in the endoplasmic reticulum. The protein localises to the cytoplasm. In terms of biological role, functions as an activator of NF-kappa-B through increased phosphorylation of the IKK complex. May function in neuronal cells differentiation. May play a role in vesicular transport from endoplasmic reticulum to Golgi. In Xenopus laevis (African clawed frog), this protein is Trafficking protein particle complex subunit 9 (trappc9).